The following is a 104-amino-acid chain: L-rhamnose mutarotase (104 aa).

Substrate is bound at residue tyrosine 18. The Proton donor role is filled by histidine 22. Substrate-binding positions include tyrosine 41 and 76 to 77 (WW).

Belongs to the rhamnose mutarotase family. As to quaternary structure, homodimer.

It is found in the cytoplasm. It carries out the reaction alpha-L-rhamnose = beta-L-rhamnose. Its pathway is carbohydrate metabolism; L-rhamnose metabolism. Functionally, involved in the anomeric conversion of L-rhamnose. The chain is L-rhamnose mutarotase from Salmonella heidelberg (strain SL476).